Reading from the N-terminus, the 393-residue chain is GDP-mannose:cellobiosyl-diphosphopolyprenol alpha-mannosyltransferase (393 aa).

It belongs to the glycosyltransferase group 1 family. Glycosyltransferase 4 subfamily.

The enzyme catalyses beta-D-Glc-(1-&gt;4)-alpha-D-Glc-di-trans,octa-cis-undecaprenyl diphosphate + GDP-alpha-D-mannose = alpha-D-Man-(1-&gt;3)-beta-D-Glc-(1-&gt;4)-alpha-D-Glc-1-di-trans,octa-cis-undecaprenyl diphosphate + GDP + H(+). Functionally, involved in the biosynthesis of the exopolysaccharide acetan, a water-soluble polysaccharide involved in production of bacterial cellulose (BC). This is GDP-mannose:cellobiosyl-diphosphopolyprenol alpha-mannosyltransferase (aceC) from Komagataeibacter xylinus (Gluconacetobacter xylinus).